Consider the following 111-residue polypeptide: Probable monothiol glutaredoxin 2 (111 aa).

A Glutaredoxin domain is found at 7 to 109; the sequence is LKFIQNAIKK…KMLKDETKLI (103 aa). K24 provides a ligand contact to glutathione. C32 provides a ligand contact to [2Fe-2S] cluster. Residues R61, F73, and 86–87 contribute to the glutathione site; that span reads CD.

Belongs to the glutaredoxin family. Monothiol subfamily.

The protein is Probable monothiol glutaredoxin 2 (grxC2) of Rickettsia typhi (strain ATCC VR-144 / Wilmington).